Here is a 431-residue protein sequence, read N- to C-terminus: Glucose-1-phosphate adenylyltransferase (431 aa).

K39 provides a ligand contact to beta-D-fructose 1,6-bisphosphate. AMP contacts are provided by R40, H46, and R52. Y114 serves as a coordination point for alpha-D-glucose 1-phosphate. R130 lines the AMP pocket. Alpha-D-glucose 1-phosphate contacts are provided by residues G179, 194-195 (EK), and S212. AMP is bound by residues E370 and R386. Beta-D-fructose 1,6-bisphosphate contacts are provided by residues 419–423 (REMLR) and 429–431 (QER).

The protein belongs to the bacterial/plant glucose-1-phosphate adenylyltransferase family. As to quaternary structure, homotetramer.

The enzyme catalyses alpha-D-glucose 1-phosphate + ATP + H(+) = ADP-alpha-D-glucose + diphosphate. It functions in the pathway glycan biosynthesis; glycogen biosynthesis. Allosterically activated by fructose-1,6-bisphosphate (F16BP) and inhibited by AMP. Functionally, involved in the biosynthesis of ADP-glucose, a building block required for the elongation reactions to produce glycogen. Catalyzes the reaction between ATP and alpha-D-glucose 1-phosphate (G1P) to produce pyrophosphate and ADP-Glc. The sequence is that of Glucose-1-phosphate adenylyltransferase from Escherichia fergusonii (strain ATCC 35469 / DSM 13698 / CCUG 18766 / IAM 14443 / JCM 21226 / LMG 7866 / NBRC 102419 / NCTC 12128 / CDC 0568-73).